The following is a 140-amino-acid chain: uncharacterized protein (140 aa).

This is an uncharacterized protein from Mycoplasma genitalium (strain ATCC 33530 / DSM 19775 / NCTC 10195 / G37) (Mycoplasmoides genitalium).